The chain runs to 156 residues: ATP synthase subunit b (156 aa).

A helical transmembrane segment spans residues 5 to 25 (LTLIGQAIAFAVFVWFCMKFV).

This sequence belongs to the ATPase B chain family. In terms of assembly, F-type ATPases have 2 components, F(1) - the catalytic core - and F(0) - the membrane proton channel. F(1) has five subunits: alpha(3), beta(3), gamma(1), delta(1), epsilon(1). F(0) has three main subunits: a(1), b(2) and c(10-14). The alpha and beta chains form an alternating ring which encloses part of the gamma chain. F(1) is attached to F(0) by a central stalk formed by the gamma and epsilon chains, while a peripheral stalk is formed by the delta and b chains.

It is found in the cell inner membrane. In terms of biological role, f(1)F(0) ATP synthase produces ATP from ADP in the presence of a proton or sodium gradient. F-type ATPases consist of two structural domains, F(1) containing the extramembraneous catalytic core and F(0) containing the membrane proton channel, linked together by a central stalk and a peripheral stalk. During catalysis, ATP synthesis in the catalytic domain of F(1) is coupled via a rotary mechanism of the central stalk subunits to proton translocation. Functionally, component of the F(0) channel, it forms part of the peripheral stalk, linking F(1) to F(0). The protein is ATP synthase subunit b of Chromohalobacter salexigens (strain ATCC BAA-138 / DSM 3043 / CIP 106854 / NCIMB 13768 / 1H11).